The primary structure comprises 116 residues: uncharacterized protein (116 aa).

This is an uncharacterized protein from Schizosaccharomyces pombe (strain 972 / ATCC 24843) (Fission yeast).